A 433-amino-acid polypeptide reads, in one-letter code: Putative tartrate transporter (433 aa).

Helical transmembrane passes span 17 to 37, 47 to 67, 82 to 102, 113 to 133, 139 to 159, 177 to 197, 242 to 262, 275 to 295, 314 to 334, 350 to 370, and 395 to 415; these read IVPF…NIGF, GFSS…YFLF, IWIA…AFVQ, LLGV…SFWF, AAVT…GSPI, WMFL…LFYL, VIAL…LGIW, LQVG…MVLW, LLAA…TVLI, LWSM…IATI, and FAGG…VTLV.

This sequence belongs to the major facilitator superfamily. Phthalate permease family.

It is found in the cell membrane. In terms of biological role, component of the tartrate utilization system and may allow entry of tartrate and tartrate dehydrogenase. This is Putative tartrate transporter (ttuB) from Agrobacterium vitis (Rhizobium vitis).